The sequence spans 167 residues: Shikimate kinase (167 aa).

ATP is bound at residue 12-17 (GSGKTT). Position 16 (Thr-16) interacts with Mg(2+). Asp-34, Arg-58, and Gly-80 together coordinate substrate. Position 117 (Arg-117) interacts with ATP. Residue Arg-135 participates in substrate binding. Arg-152 is an ATP binding site.

It belongs to the shikimate kinase family. Monomer. Requires Mg(2+) as cofactor.

Its subcellular location is the cytoplasm. The catalysed reaction is shikimate + ATP = 3-phosphoshikimate + ADP + H(+). It participates in metabolic intermediate biosynthesis; chorismate biosynthesis; chorismate from D-erythrose 4-phosphate and phosphoenolpyruvate: step 5/7. Its function is as follows. Catalyzes the specific phosphorylation of the 3-hydroxyl group of shikimic acid using ATP as a cosubstrate. In Salinispora tropica (strain ATCC BAA-916 / DSM 44818 / JCM 13857 / NBRC 105044 / CNB-440), this protein is Shikimate kinase.